Reading from the N-terminus, the 473-residue chain is Heavy metal-associated isoprenylated plant protein 32 (473 aa).

The HMA domain maps to 9 to 72; that stretch reads IQTCVLKVNI…KLAKSGKHAE (64 aa). A metal cation contacts are provided by Cys20 and Cys23. Disordered stretches follow at residues 96-139, 162-230, and 246-343; these read QIDH…KMGQ, KLPP…PNMT, and ANLA…QNMS. Gly residues predominate over residues 118 to 131; sequence KNGGGGGGGGGGGN. Positions 187–217 are enriched in acidic residues; it reads PEDDDDDDFSDEFDDEFTDDDDDEFDDEFDD. Residues 253-339 are compositionally biased toward gly residues; that stretch reads AKNGGKGAPA…GFRPMGGGGP (87 aa). Cys470 bears the Cysteine methyl ester mark. Residue Cys470 is the site of S-farnesyl cysteine attachment. Residues 471–473 constitute a propeptide, removed in mature form; that stretch reads DIM.

Belongs to the HIPP family.

Heavy-metal-binding protein. The protein is Heavy metal-associated isoprenylated plant protein 32 of Arabidopsis thaliana (Mouse-ear cress).